The sequence spans 110 residues: MALWIRFLPLLALLILWEPRPAQAFVKQHLCGSHLVEALYLVCGERGFFYTPMSRREVEDPQVAQLELGGGPGAGDLQTLALEVARQKRGIVDQCCTSICSLYQLENYCN.

The signal sequence occupies residues 1-24 (MALWIRFLPLLALLILWEPRPAQA). 3 cysteine pairs are disulfide-bonded: Cys-31/Cys-96, Cys-43/Cys-109, and Cys-95/Cys-100. Positions 57–87 (EVEDPQVAQLELGGGPGAGDLQTLALEVARQ) are cleaved as a propeptide — c peptide.

The protein belongs to the insulin family. As to quaternary structure, heterodimer of a B chain and an A chain linked by two disulfide bonds.

Its subcellular location is the secreted. Insulin decreases blood glucose concentration. It increases cell permeability to monosaccharides, amino acids and fatty acids. It accelerates glycolysis, the pentose phosphate cycle, and glycogen synthesis in liver. The polypeptide is Insulin-2 (Ins2) (Rattus norvegicus (Rat)).